The primary structure comprises 101 residues: Integration host factor subunit beta (101 aa).

The protein belongs to the bacterial histone-like protein family. Heterodimer of an alpha and a beta chain.

Its function is as follows. This protein is one of the two subunits of integration host factor, a specific DNA-binding protein that functions in genetic recombination as well as in transcriptional and translational control. The chain is Integration host factor subunit beta from Maricaulis maris (strain MCS10) (Caulobacter maris).